The chain runs to 608 residues: Glutamine--fructose-6-phosphate aminotransferase [isomerizing] (608 aa).

Residue C2 is the Nucleophile; for GATase activity of the active site. The Glutamine amidotransferase type-2 domain occupies 2-217 (CGIVGIVGTQ…DGDCAIVTRD (216 aa)). 2 consecutive SIS domains span residues 281-422 (ADKA…ARGT) and 456-598 (LSRD…VDQP). Catalysis depends on K603, which acts as the For Fru-6P isomerization activity.

As to quaternary structure, homodimer.

It localises to the cytoplasm. The enzyme catalyses D-fructose 6-phosphate + L-glutamine = D-glucosamine 6-phosphate + L-glutamate. Its function is as follows. Catalyzes the first step in hexosamine metabolism, converting fructose-6P into glucosamine-6P using glutamine as a nitrogen source. This Agrobacterium fabrum (strain C58 / ATCC 33970) (Agrobacterium tumefaciens (strain C58)) protein is Glutamine--fructose-6-phosphate aminotransferase [isomerizing].